The sequence spans 97 residues: Co-chaperonin GroES (97 aa).

Belongs to the GroES chaperonin family. As to quaternary structure, heptamer of 7 subunits arranged in a ring. Interacts with the chaperonin GroEL.

The protein localises to the cytoplasm. Together with the chaperonin GroEL, plays an essential role in assisting protein folding. The GroEL-GroES system forms a nano-cage that allows encapsulation of the non-native substrate proteins and provides a physical environment optimized to promote and accelerate protein folding. GroES binds to the apical surface of the GroEL ring, thereby capping the opening of the GroEL channel. The chain is Co-chaperonin GroES from Pseudomonas fluorescens (strain Pf0-1).